We begin with the raw amino-acid sequence, 348 residues long: Protein RecA (348 aa).

ATP is bound at residue 65–72 (GPESSGKT). Residues 328–348 (SKPQAETSARLATQEELADDY) are disordered.

Belongs to the RecA family.

The protein resides in the cytoplasm. Its function is as follows. Can catalyze the hydrolysis of ATP in the presence of single-stranded DNA, the ATP-dependent uptake of single-stranded DNA by duplex DNA, and the ATP-dependent hybridization of homologous single-stranded DNAs. It interacts with LexA causing its activation and leading to its autocatalytic cleavage. This is Protein RecA from Ectopseudomonas oleovorans (Pseudomonas oleovorans).